Here is a 53-residue protein sequence, read N- to C-terminus: Sec-independent protein translocase protein TatA (53 aa).

Residues 1–21 (MGMSVSHLLIVLLIIFVLFGA) form a helical membrane-spanning segment.

Belongs to the TatA/E family. The Tat system comprises two distinct complexes: a TatABC complex, containing multiple copies of TatA, TatB and TatC subunits, and a separate TatA complex, containing only TatA subunits. Substrates initially bind to the TatABC complex, which probably triggers association of the separate TatA complex to form the active translocon.

Its subcellular location is the cell inner membrane. Its function is as follows. Part of the twin-arginine translocation (Tat) system that transports large folded proteins containing a characteristic twin-arginine motif in their signal peptide across membranes. TatA could form the protein-conducting channel of the Tat system. The protein is Sec-independent protein translocase protein TatA of Rickettsia massiliae (strain Mtu5).